A 348-amino-acid polypeptide reads, in one-letter code: Dihydroorotase (348 aa).

Zn(2+) contacts are provided by His-14 and His-16. Substrate contacts are provided by residues 16–18 (HLR) and Asn-42. 3 residues coordinate Zn(2+): Lys-100, His-137, and His-175. Lys-100 is subject to N6-carboxylysine. His-137 contacts substrate. Residue Leu-220 coordinates substrate. A Zn(2+)-binding site is contributed by Asp-248. Asp-248 is an active-site residue. Residues His-252 and Ala-264 each contribute to the substrate site.

The protein belongs to the metallo-dependent hydrolases superfamily. DHOase family. Class II DHOase subfamily. As to quaternary structure, homodimer. Zn(2+) is required as a cofactor.

The catalysed reaction is (S)-dihydroorotate + H2O = N-carbamoyl-L-aspartate + H(+). It participates in pyrimidine metabolism; UMP biosynthesis via de novo pathway; (S)-dihydroorotate from bicarbonate: step 3/3. Functionally, catalyzes the reversible cyclization of carbamoyl aspartate to dihydroorotate. The sequence is that of Dihydroorotase from Pseudomonas fluorescens (strain Pf0-1).